The primary structure comprises 424 residues: Imidazolonepropionase (424 aa).

Fe(3+) is bound by residues His-85 and His-87. Zn(2+)-binding residues include His-85 and His-87. 4-imidazolone-5-propanoate-binding residues include Arg-94, Tyr-157, and His-190. N-formimidoyl-L-glutamate is bound at residue Tyr-157. Residue His-255 participates in Fe(3+) binding. Residue His-255 participates in Zn(2+) binding. Glu-258 is a 4-imidazolone-5-propanoate binding site. Asp-329 provides a ligand contact to Fe(3+). Asp-329 contributes to the Zn(2+) binding site. N-formimidoyl-L-glutamate contacts are provided by Asn-331 and Gly-333. Ser-334 serves as a coordination point for 4-imidazolone-5-propanoate.

It belongs to the metallo-dependent hydrolases superfamily. HutI family. Zn(2+) is required as a cofactor. It depends on Fe(3+) as a cofactor.

The protein localises to the cytoplasm. The enzyme catalyses 4-imidazolone-5-propanoate + H2O = N-formimidoyl-L-glutamate. It participates in amino-acid degradation; L-histidine degradation into L-glutamate; N-formimidoyl-L-glutamate from L-histidine: step 3/3. Catalyzes the hydrolytic cleavage of the carbon-nitrogen bond in imidazolone-5-propanoate to yield N-formimidoyl-L-glutamate. It is the third step in the universal histidine degradation pathway. In Brevibacillus brevis (strain 47 / JCM 6285 / NBRC 100599), this protein is Imidazolonepropionase.